We begin with the raw amino-acid sequence, 325 residues long: uncharacterized protein (325 aa).

The chain crosses the membrane as a helical span at residues 10–30; the sequence is IVFVSLAALVLLVSVSVFIYH. Residues 94 to 166 form the AB hydrolase-1 domain; that stretch reads KIAVVDRAGY…EIKAIIAMDI (73 aa).

It is found in the cell membrane. This is an uncharacterized protein from Bacillus subtilis (strain 168).